Reading from the N-terminus, the 322-residue chain is Acetyl-coenzyme A carboxylase carboxyl transferase subunit alpha (322 aa).

The 262-residue stretch at 32–293 (DISEEIARLE…KRALQDALRQ (262 aa)) folds into the CoA carboxyltransferase C-terminal domain.

Belongs to the AccA family. As to quaternary structure, acetyl-CoA carboxylase is a heterohexamer composed of biotin carboxyl carrier protein (AccB), biotin carboxylase (AccC) and two subunits each of ACCase subunit alpha (AccA) and ACCase subunit beta (AccD).

It localises to the cytoplasm. It catalyses the reaction N(6)-carboxybiotinyl-L-lysyl-[protein] + acetyl-CoA = N(6)-biotinyl-L-lysyl-[protein] + malonyl-CoA. The protein operates within lipid metabolism; malonyl-CoA biosynthesis; malonyl-CoA from acetyl-CoA: step 1/1. Functionally, component of the acetyl coenzyme A carboxylase (ACC) complex. First, biotin carboxylase catalyzes the carboxylation of biotin on its carrier protein (BCCP) and then the CO(2) group is transferred by the carboxyltransferase to acetyl-CoA to form malonyl-CoA. The protein is Acetyl-coenzyme A carboxylase carboxyl transferase subunit alpha of Aromatoleum aromaticum (strain DSM 19018 / LMG 30748 / EbN1) (Azoarcus sp. (strain EbN1)).